Consider the following 289-residue polypeptide: Formamidopyrimidine-DNA glycosylase (289 aa).

Residue Pro2 is the Schiff-base intermediate with DNA of the active site. Residue Glu3 is the Proton donor of the active site. The active-site Proton donor; for beta-elimination activity is the Lys61. 3 residues coordinate DNA: His96, Arg115, and Lys161. Residues 247–281 form an FPG-type zinc finger; that stretch reads SAYGQENLPCPRCGAPIKREKFMNRSSFSCPRCQP. The active-site Proton donor; for delta-elimination activity is Arg271.

Belongs to the FPG family. As to quaternary structure, monomer. Zn(2+) serves as cofactor.

It catalyses the reaction Hydrolysis of DNA containing ring-opened 7-methylguanine residues, releasing 2,6-diamino-4-hydroxy-5-(N-methyl)formamidopyrimidine.. The catalysed reaction is 2'-deoxyribonucleotide-(2'-deoxyribose 5'-phosphate)-2'-deoxyribonucleotide-DNA = a 3'-end 2'-deoxyribonucleotide-(2,3-dehydro-2,3-deoxyribose 5'-phosphate)-DNA + a 5'-end 5'-phospho-2'-deoxyribonucleoside-DNA + H(+). Involved in base excision repair of DNA damaged by oxidation or by mutagenic agents. Acts as a DNA glycosylase that recognizes and removes damaged bases. Has a preference for oxidized purines, such as 7,8-dihydro-8-oxoguanine (8-oxoG). Has AP (apurinic/apyrimidinic) lyase activity and introduces nicks in the DNA strand. Cleaves the DNA backbone by beta-delta elimination to generate a single-strand break at the site of the removed base with both 3'- and 5'-phosphates. In Rhodococcus erythropolis (strain PR4 / NBRC 100887), this protein is Formamidopyrimidine-DNA glycosylase.